Consider the following 687-residue polypeptide: DNA-directed RNA polymerase subunit beta' (687 aa).

Zn(2+) is bound by residues C69, C71, C87, and C90. Residues D492, D494, and D496 each contribute to the Mg(2+) site.

It belongs to the RNA polymerase beta' chain family. RpoC1 subfamily. As to quaternary structure, in plastids the minimal PEP RNA polymerase catalytic core is composed of four subunits: alpha, beta, beta', and beta''. When a (nuclear-encoded) sigma factor is associated with the core the holoenzyme is formed, which can initiate transcription. The cofactor is Mg(2+). Zn(2+) serves as cofactor.

It is found in the plastid. It localises to the chloroplast. The enzyme catalyses RNA(n) + a ribonucleoside 5'-triphosphate = RNA(n+1) + diphosphate. Its function is as follows. DNA-dependent RNA polymerase catalyzes the transcription of DNA into RNA using the four ribonucleoside triphosphates as substrates. The sequence is that of DNA-directed RNA polymerase subunit beta' from Silene latifolia (White campion).